A 1221-amino-acid chain; its full sequence is 2-oxoglutarate dehydrogenase E1/E2 component (1221 aa).

The segment at 2–40 (SSASTFGQNAWLVDEMFQQFQKDPKSVDKEWRELFEAQG) is 2-oxoglutarate dehydrogenase E1, N-terminal part. Positions 22–107 (QKDPKSVDKE…KLPEPGQTPI (86 aa)) are disordered. The span at 23 to 36 (KDPKSVDKEWRELF) shows a compositional bias: basic and acidic residues. Positions 41 to 52 (GPNTTPATTEAQ) are enriched in polar residues. Residues 41–89 (GPNTTPATTEAQPSAPKESAKPAPKAAPAAKAAPRVETKPADKTAPKAK) form a linker region. A compositionally biased stretch (low complexity) spans 53-73 (PSAPKESAKPAPKAAPAAKAA). A compositionally biased stretch (basic and acidic residues) spans 74 to 90 (PRVETKPADKTAPKAKE). Residues 90–337 (ESSVPQQPKL…LRTMSRLLTD (248 aa)) are succinyltransferase E2. His316 functions as the Proton acceptor; for succinyltransferase activity in the catalytic mechanism. A 2-oxoglutarate dehydrogenase E1, C-terminal part region spans residues 338 to 1221 (DSFWDEIFDA…KQLIDEAFEA (884 aa)). Arg544 lines the thiamine diphosphate pocket. 2 residues coordinate 2-oxoglutarate: His583 and Ser608. The thiamine diphosphate site is built by Ser608, Leu610, Asp645, Ala646, Ala647, and Asn678. Asp645 is a Mg(2+) binding site. Mg(2+)-binding residues include Asn678 and Ile680. His1017 is a binding site for 2-oxoglutarate. 5 residues coordinate acetyl-CoA: Thr1035, Arg1051, Lys1087, Ser1090, and Arg1144.

The protein in the N-terminal section; belongs to the alpha-ketoglutarate dehydrogenase family. It in the C-terminal section; belongs to the 2-oxoacid dehydrogenase family. As to quaternary structure, homodimer. Part of an unusual ODH/PDH supercomplex, consisting of AceE (E1), AceF (E2), and Lpd (E3) together with OdhA (E1+E2). Interacts with the FHA domain of unphosphorylated OdhI via its C-terminal dehydrogenase domain. The cofactor is Mg(2+). It depends on thiamine diphosphate as a cofactor.

The catalysed reaction is N(6)-[(R)-lipoyl]-L-lysyl-[protein] + 2-oxoglutarate + H(+) = N(6)-[(R)-S(8)-succinyldihydrolipoyl]-L-lysyl-[protein] + CO2. It catalyses the reaction N(6)-[(R)-dihydrolipoyl]-L-lysyl-[protein] + succinyl-CoA = N(6)-[(R)-S(8)-succinyldihydrolipoyl]-L-lysyl-[protein] + CoA. The protein operates within carbohydrate metabolism; tricarboxylic acid cycle; succinyl-CoA from 2-oxoglutarate (dehydrogenase route): step 1/1. With respect to regulation, inhibited by unphosphorylated OdhI, but not by phosphorylated OdhI. Catalyzes the E1 and E2 reactions as part of 2-oxoglutarate dehydrogenase (ODH) activity, to convert 2-oxoglutarate to succinyl-CoA and CO(2). OdhA has reductase activity with 2-oxoglutarate but does not react with pyruvate, and also displays transsuccinylase but no transacetylase activity. Since OdhA is not lipoylated, the succinyltransferase activity of its E2 domain is dependent on lipoyl residues of the acetyltransferase AceF. The protein is 2-oxoglutarate dehydrogenase E1/E2 component of Corynebacterium glutamicum (strain ATCC 13032 / DSM 20300 / JCM 1318 / BCRC 11384 / CCUG 27702 / LMG 3730 / NBRC 12168 / NCIMB 10025 / NRRL B-2784 / 534).